The sequence spans 695 residues: DNA ligase (695 aa).

NAD(+) contacts are provided by residues 44–48 (DAEYD), 93–94 (SL), and glutamate 123. Lysine 125 serves as the catalytic N6-AMP-lysine intermediate. Positions 146, 184, 300, and 324 each coordinate NAD(+). Zn(2+) contacts are provided by cysteine 418, cysteine 421, cysteine 436, and cysteine 442. The region spanning 605–694 (SAAKPLAGIT…PDAARSMAQR (90 aa)) is the BRCT domain.

This sequence belongs to the NAD-dependent DNA ligase family. LigA subfamily. Requires Mg(2+) as cofactor. Mn(2+) serves as cofactor.

The enzyme catalyses NAD(+) + (deoxyribonucleotide)n-3'-hydroxyl + 5'-phospho-(deoxyribonucleotide)m = (deoxyribonucleotide)n+m + AMP + beta-nicotinamide D-nucleotide.. DNA ligase that catalyzes the formation of phosphodiester linkages between 5'-phosphoryl and 3'-hydroxyl groups in double-stranded DNA using NAD as a coenzyme and as the energy source for the reaction. It is essential for DNA replication and repair of damaged DNA. The sequence is that of DNA ligase from Acidothermus cellulolyticus (strain ATCC 43068 / DSM 8971 / 11B).